The following is a 652-amino-acid chain: MSIFRLSRTFSLETCLKSSSFKIRWRFFSVSYASRKLASEDNKPSIQEVVRGIPQNRVRNWAVIAHIDHGKSTLSDCILKLTGVINEHNFRNQFLDKLEVERRRGITVKAQTCSMIYYYHGQSYLLNLIDTPGHVDFRAEVMHSLAACEGCILLVDASQGIQAQTLSNFYMAFSQNLVIIPVLNKVDLPTADVDRTLIQVQQTFDIPMSKPILVSSKTGKNVEQILPEIIQKIPPPKGSENAPLRCLLIDSWYNSYQGVIGLVRIMEGFIKKGGKVMSVNTGRKYEVQQVGIMYPDMTEVSRLRAGQVGYIIWNMKNIDEAIVGDTYSTIGSNVEALPGFSIPQSMVYVGAFPLDGSDYERLNDNIEQLALNDRAINVQKENSSALGMGWRLGFLGTLHLSVFIDRLKDEYGKELLITSPTVPYRIKYKNGREEVISNPNLFPTNHQGISELLEPTVDATIITPSEYLGDVIKLCESCRGLQKDCTYMSESRCMIKYQLPLAHLVEDFFGRLKGTTSGFATLDYEESDYVPADLVRLSIFMSGKSVDALCSIVHRSLALQRGREWIQRLKPLVPKQLYEVILQAVIDNRVVARESISALRKNVTAKCYGGDVTRKQKLLNKQKEGKKRLKSVGNVSIDKSVFYEFLTKKQSN.

Residues 1–44 constitute a mitochondrion transit peptide; sequence MSIFRLSRTFSLETCLKSSSFKIRWRFFSVSYASRKLASEDNKP. A tr-type G domain is found at 56 to 237; it reads NRVRNWAVIA…EIIQKIPPPK (182 aa). GTP-binding positions include 65-72, 130-134, and 184-187; these read AHIDHGKS, DTPGH, and NKVD.

It belongs to the TRAFAC class translation factor GTPase superfamily. Classic translation factor GTPase family. LepA subfamily.

Its subcellular location is the mitochondrion inner membrane. The catalysed reaction is GTP + H2O = GDP + phosphate + H(+). Its function is as follows. Promotes mitochondrial protein synthesis. May act as a fidelity factor of the translation reaction, by catalyzing a one-codon backward translocation of tRNAs on improperly translocated ribosomes. Binds to mitochondrial ribosomes in a GTP-dependent manner. This Schizosaccharomyces pombe (strain 972 / ATCC 24843) (Fission yeast) protein is Translation factor guf1, mitochondrial (guf1).